The primary structure comprises 209 residues: Large ribosomal subunit protein uL3 (209 aa).

The protein belongs to the universal ribosomal protein uL3 family. Part of the 50S ribosomal subunit. Forms a cluster with proteins L14 and L19.

In terms of biological role, one of the primary rRNA binding proteins, it binds directly near the 3'-end of the 23S rRNA, where it nucleates assembly of the 50S subunit. The chain is Large ribosomal subunit protein uL3 from Pelobacter propionicus (strain DSM 2379 / NBRC 103807 / OttBd1).